The chain runs to 72 residues: Translation initiation factor IF-1 (72 aa).

The 72-residue stretch at 1–72 (MAKEDCIEME…TKGRIKFRSK (72 aa)) folds into the S1-like domain.

The protein belongs to the IF-1 family. As to quaternary structure, component of the 30S ribosomal translation pre-initiation complex which assembles on the 30S ribosome in the order IF-2 and IF-3, IF-1 and N-formylmethionyl-tRNA(fMet); mRNA recruitment can occur at any time during PIC assembly.

The protein localises to the cytoplasm. Functionally, one of the essential components for the initiation of protein synthesis. Stabilizes the binding of IF-2 and IF-3 on the 30S subunit to which N-formylmethionyl-tRNA(fMet) subsequently binds. Helps modulate mRNA selection, yielding the 30S pre-initiation complex (PIC). Upon addition of the 50S ribosomal subunit IF-1, IF-2 and IF-3 are released leaving the mature 70S translation initiation complex. The chain is Translation initiation factor IF-1 from Francisella tularensis subsp. tularensis (strain FSC 198).